A 73-amino-acid chain; its full sequence is Large ribosomal subunit protein bL32c (73 aa).

It belongs to the bacterial ribosomal protein bL32 family.

It localises to the plastid. The protein resides in the chloroplast. In Jasminum nudiflorum (Winter jasmine), this protein is Large ribosomal subunit protein bL32c.